The sequence spans 380 residues: Guanine nucleotide-binding protein subunit beta (380 aa).

7 WD repeats span residues glycine 64–asparagine 94, leucine 106–asparagine 136, glycine 155–aspartate 186, glycine 203–aspartate 234, glycine 247–aspartate 277, asparagine 296–aspartate 326, and serine 342–alanine 372.

The protein belongs to the WD repeat G protein beta family. G proteins are composed of 3 units, alpha, beta and gamma. Interacts with the gamma subunits RGG1 and RGG2.

The protein localises to the cell membrane. Guanine nucleotide-binding proteins (G proteins) are involved as modulators or transducers in various transmembrane signaling systems. The beta and gamma chains are required for the GTPase activity, for replacement of GDP by GTP, and for G protein-effector interaction. This chain is Guanine nucleotide-binding protein subunit beta, found in Oryza sativa subsp. japonica (Rice).